Here is a 177-residue protein sequence, read N- to C-terminus: Protein TERMINAL FLOWER 1 (177 aa).

The protein belongs to the phosphatidylethanolamine-binding protein family. Expressed below the apical dome of inflorescence and coflorescence meristems, and in inflorescence stem.

Its subcellular location is the cytoplasm. Functionally, controls inflorescence meristem identity and is required for maintenance of an indeterminate inflorescence. Prevents the expression of 'APETALA1' and 'LEAFY'. Also plays a role in the regulation of the time of flowering in the long-day flowering pathway. May form complexes with phosphorylated ligands by interfering with kinases and their effectors. The polypeptide is Protein TERMINAL FLOWER 1 (TFL1) (Arabidopsis thaliana (Mouse-ear cress)).